A 316-amino-acid polypeptide reads, in one-letter code: L-lactate dehydrogenase (316 aa).

NAD(+) contacts are provided by residues V15, D37, K42, Y68, and 82-83; that span reads GL. Residues Q85, R91, and 123 to 126 contribute to the substrate site; that span reads NPVD. NAD(+) contacts are provided by residues 121–123 and T146; that span reads ASN. 151–154 is a binding site for substrate; the sequence is DTSR. Positions 156 and 171 each coordinate beta-D-fructose 1,6-bisphosphate. H178 serves as the catalytic Proton acceptor. Position 222 is a phosphotyrosine (Y222). T231 provides a ligand contact to substrate.

The protein belongs to the LDH/MDH superfamily. LDH family. As to quaternary structure, homotetramer.

It is found in the cytoplasm. The catalysed reaction is (S)-lactate + NAD(+) = pyruvate + NADH + H(+). Its pathway is fermentation; pyruvate fermentation to lactate; (S)-lactate from pyruvate: step 1/1. Its activity is regulated as follows. Allosterically activated by fructose 1,6-bisphosphate (FBP). In terms of biological role, catalyzes the conversion of lactate to pyruvate. The polypeptide is L-lactate dehydrogenase (Borreliella burgdorferi (strain ATCC 35210 / DSM 4680 / CIP 102532 / B31) (Borrelia burgdorferi)).